The primary structure comprises 208 residues: Uridine kinase (208 aa).

11–18 (GGTGSGKS) contributes to the ATP binding site.

It belongs to the uridine kinase family.

Its subcellular location is the cytoplasm. The enzyme catalyses uridine + ATP = UMP + ADP + H(+). It carries out the reaction cytidine + ATP = CMP + ADP + H(+). The protein operates within pyrimidine metabolism; CTP biosynthesis via salvage pathway; CTP from cytidine: step 1/3. It functions in the pathway pyrimidine metabolism; UMP biosynthesis via salvage pathway; UMP from uridine: step 1/1. In Clostridium novyi (strain NT), this protein is Uridine kinase.